The sequence spans 553 residues: Glutamine--tRNA ligase (553 aa).

Positions 34–44 (PEPNGYLHIGH) match the 'HIGH' region motif. Residues 35 to 37 (EPN) and 41 to 47 (HIGHAKS) contribute to the ATP site. L-glutamine-binding residues include Asp68 and Tyr213. ATP is bound by residues Thr232 and 262–263 (RL). Residues 269–273 (LTSKR) carry the 'KMSKS' region motif.

The protein belongs to the class-I aminoacyl-tRNA synthetase family. As to quaternary structure, monomer.

Its subcellular location is the cytoplasm. It catalyses the reaction tRNA(Gln) + L-glutamine + ATP = L-glutaminyl-tRNA(Gln) + AMP + diphosphate. This is Glutamine--tRNA ligase from Psychromonas ingrahamii (strain DSM 17664 / CCUG 51855 / 37).